Reading from the N-terminus, the 506-residue chain is FAD-linked oxidoreductase chry5 (506 aa).

A signal peptide spans 1 to 17; sequence MHLQALTGLATLAVTAA. The region spanning 59-241 is the FAD-binding PCMH-type domain; it reads LDKPTVNIVA…TSVTSKTYDA (183 aa). N-linked (GlcNAc...) asparagine glycans are attached at residues Asn-205, Asn-272, Asn-281, Asn-389, and Asn-431.

The protein belongs to the oxygen-dependent FAD-linked oxidoreductase family. The cofactor is FAD.

It functions in the pathway pigment biosynthesis. Functionally, FAD-linked oxidoreductase; part of the gene cluster that mediates the biosynthesis of the yellow pigment chrysogine. Pyruvic acid and anthranilic acid are likely substrates for the nonribosomal peptide synthetase chry1/NRPS14, with pyruvic acid adenylated by the first A domain and anthranilic acid by the second. If pyruvic acid and anthranilic acid are merged and released from chry1/NRPS14 by hydrolysis, a subsequent amidation would lead to 2-pyruvoylaminobenzamide. This process is probably catalyzed by the amidotransferase chry2 using glutamine as amino donor. The dehydrogenase chry5 that has a terminal berberine bridge domain for C-N cyclization could catalyze the cyclization of 2-pyruvoylaminobenzamide to yield acetyl-4(3H)-quinazolidinone. A final reduction of acetyl-4(3H)-quinazolidinone catalyzed by the oxidoreductase chry4 would result in chrysogine. This chain is FAD-linked oxidoreductase chry5, found in Gibberella zeae (strain ATCC MYA-4620 / CBS 123657 / FGSC 9075 / NRRL 31084 / PH-1) (Wheat head blight fungus).